The chain runs to 362 residues: sn-glycerol-3-phosphate import ATP-binding protein UgpC (362 aa).

In terms of domain architecture, ABC transporter spans leucine 4–isoleucine 235. Position 37–44 (glycine 37–serine 44) interacts with ATP.

This sequence belongs to the ABC transporter superfamily. sn-glycerol-3-phosphate importer (TC 3.A.1.1.3) family. In terms of assembly, the complex is composed of two ATP-binding proteins (UgpC), two transmembrane proteins (UgpA and UgpE) and a solute-binding protein (UgpB).

It is found in the cell inner membrane. It catalyses the reaction sn-glycerol 3-phosphate(out) + ATP + H2O = sn-glycerol 3-phosphate(in) + ADP + phosphate + H(+). Its function is as follows. Part of the ABC transporter complex UgpBAEC involved in sn-glycerol-3-phosphate (G3P) import. Responsible for energy coupling to the transport system. In Bordetella bronchiseptica (strain ATCC BAA-588 / NCTC 13252 / RB50) (Alcaligenes bronchisepticus), this protein is sn-glycerol-3-phosphate import ATP-binding protein UgpC.